A 116-amino-acid chain; its full sequence is Ribosome-binding factor A (116 aa).

The protein belongs to the RbfA family. In terms of assembly, monomer. Binds 30S ribosomal subunits, but not 50S ribosomal subunits or 70S ribosomes.

It localises to the cytoplasm. Its function is as follows. One of several proteins that assist in the late maturation steps of the functional core of the 30S ribosomal subunit. Associates with free 30S ribosomal subunits (but not with 30S subunits that are part of 70S ribosomes or polysomes). Required for efficient processing of 16S rRNA. May interact with the 5'-terminal helix region of 16S rRNA. The sequence is that of Ribosome-binding factor A from Buchnera aphidicola subsp. Cinara cedri (strain Cc).